The chain runs to 1171 residues: Phytochrome B (1171 aa).

Residues 1 to 19 (MASGSRATPTRSPSSARPA) show a composition bias toward low complexity. Residues 1–53 (MASGSRATPTRSPSSARPAAPRHQHHHSQSSGGSTSRAGGGGGGGGGGGGGAA) are disordered. Residues 38-52 (AGGGGGGGGGGGGGA) are compositionally biased toward gly residues. The region spanning 259-442 (DVKLLCDTVV…AFGLQLNMEL (184 aa)) is the GAF domain. Cys364 serves as a coordination point for phytochromobilin. 2 consecutive PAS domains span residues 661–732 (VARE…LRGD) and 795–866 (DYKA…MIVL). Residues 943–1161 (YIYQEIKNPL…FFHIVLELPQ (219 aa)) form the Histidine kinase domain.

This sequence belongs to the phytochrome family. In terms of assembly, homodimer. Contains one covalently linked phytochromobilin chromophore.

Regulatory photoreceptor which exists in two forms that are reversibly interconvertible by light: the Pr form that absorbs maximally in the red region of the spectrum and the Pfr form that absorbs maximally in the far-red region. Photoconversion of Pr to Pfr induces an array of morphogenic responses, whereas reconversion of Pfr to Pr cancels the induction of those responses. Pfr controls the expression of a number of nuclear genes including those encoding the small subunit of ribulose-bisphosphate carboxylase, chlorophyll A/B binding protein, protochlorophyllide reductase, rRNA, etc. It also controls the expression of its own gene(s) in a negative feedback fashion. The polypeptide is Phytochrome B (PHYB) (Oryza sativa subsp. indica (Rice)).